A 238-amino-acid polypeptide reads, in one-letter code: 2,3,4,5-tetrahydropyridine-2,6-dicarboxylate N-acetyltransferase (238 aa).

It belongs to the transferase hexapeptide repeat family. DapH subfamily.

The enzyme catalyses (S)-2,3,4,5-tetrahydrodipicolinate + acetyl-CoA + H2O = L-2-acetamido-6-oxoheptanedioate + CoA. The protein operates within amino-acid biosynthesis; L-lysine biosynthesis via DAP pathway; LL-2,6-diaminopimelate from (S)-tetrahydrodipicolinate (acetylase route): step 1/3. In terms of biological role, catalyzes the transfer of an acetyl group from acetyl-CoA to tetrahydrodipicolinate. The sequence is that of 2,3,4,5-tetrahydropyridine-2,6-dicarboxylate N-acetyltransferase from Clostridioides difficile (strain 630) (Peptoclostridium difficile).